Here is an 823-residue protein sequence, read N- to C-terminus: Probable inorganic carbon transporter subunit DabA (823 aa).

Zn(2+)-binding residues include C361, D363, H527, and C542.

The protein belongs to the inorganic carbon transporter (TC 9.A.2) DabA family. As to quaternary structure, forms a complex with DabB. The cofactor is Zn(2+).

It localises to the cell inner membrane. Intracellular DIC accumulation is sensitive to CCCP (carbonyl cyanide-m-chlorophenylhydrazone) and DCCD (N,N-dicyclohexylcarbodiimide) and therefore likely driven by either proton potential, ATP, or both. Its function is as follows. Part of an energy-coupled inorganic carbon pump. Probably involved in transport of dissolved inorganic carbon (DIC) with upstream gene dabB (Tcr_0853); has been suggested to be a proton-DIC symporter. The protein is Probable inorganic carbon transporter subunit DabA of Hydrogenovibrio crunogenus (strain DSM 25203 / XCL-2) (Thiomicrospira crunogena).